Here is a 509-residue protein sequence, read N- to C-terminus: Proline-rich receptor-like protein kinase PERK15 (509 aa).

The disordered stretch occupies residues 1–44 (MSTDTIPSLSSPPAPEFPSTTPDTATSPAPSQPSIIGPSSLAPF). Over 1–61 (MSTDTIPSLS…DGGSRNVALT (61 aa)) the chain is Extracellular. The span at 18–34 (PSTTPDTATSPAPSQPS) shows a compositional bias: low complexity. A helical membrane pass occupies residues 62–82 (GLITGVVLGATFVLLGVCIFV). Residues 83-509 (CFYKRKKRKL…IEPEKNTKDT (427 aa)) are Cytoplasmic-facing. At Thr132 the chain carries Phosphothreonine. Residues 143-423 (FSNTNLLGQG…VRAFEGNISI (281 aa)) enclose the Protein kinase domain. ATP-binding positions include 149 to 157 (LGQGGFGYV) and Lys171. Position 216 is a phosphotyrosine (Tyr216). Asp267 serves as the catalytic Proton acceptor. Ser300 carries the post-translational modification Phosphoserine. Thr301 and Thr306 each carry phosphothreonine. Position 314 is a phosphotyrosine (Tyr314). Over residues 468 to 499 (FGSSECSGLTSDNGQNPSGSSSITEGQRTTQE) the composition is skewed to polar residues. The interval 468-509 (FGSSECSGLTSDNGQNPSGSSSITEGQRTTQEIEPEKNTKDT) is disordered.

It belongs to the protein kinase superfamily. Ser/Thr protein kinase family. As to expression, mostly expressed in inflorescence bolts, and, to a lower extent, in flower buds and siliques.

Its subcellular location is the cell membrane. The enzyme catalyses L-seryl-[protein] + ATP = O-phospho-L-seryl-[protein] + ADP + H(+). It carries out the reaction L-threonyl-[protein] + ATP = O-phospho-L-threonyl-[protein] + ADP + H(+). The chain is Proline-rich receptor-like protein kinase PERK15 (PERK15) from Arabidopsis thaliana (Mouse-ear cress).